A 63-amino-acid chain; its full sequence is Sperm protamine P1 (63 aa).

The tract at residues 1–63 is disordered; that stretch reads MARYRRHSRS…RYSRRGRRRY (63 aa).

It belongs to the protamine P1 family. In terms of tissue distribution, testis.

It localises to the nucleus. The protein resides in the chromosome. Protamines substitute for histones in the chromatin of sperm during the haploid phase of spermatogenesis. They compact sperm DNA into a highly condensed, stable and inactive complex. The protein is Sperm protamine P1 (PRM1) of Sminthopsis griseoventer (Gray-bellied dunnart).